Consider the following 220-residue polypeptide: Phosphoenolpyruvate guanylyltransferase (220 aa).

Phosphoenolpyruvate-binding residues include Thr-154, Gly-169, and Ser-172.

It belongs to the CofC family.

The catalysed reaction is phosphoenolpyruvate + GTP + H(+) = enolpyruvoyl-2-diphospho-5'-guanosine + diphosphate. It participates in cofactor biosynthesis; coenzyme F420 biosynthesis. Its function is as follows. Guanylyltransferase that catalyzes the activation of phosphoenolpyruvate (PEP) as enolpyruvoyl-2-diphospho-5'-guanosine, via the condensation of PEP with GTP. It is involved in the biosynthesis of coenzyme F420, a hydride carrier cofactor. This is Phosphoenolpyruvate guanylyltransferase from Mycolicibacterium paratuberculosis (strain ATCC BAA-968 / K-10) (Mycobacterium paratuberculosis).